A 1630-amino-acid chain; its full sequence is Probable phosphoinositide phosphatase SAC9 (1630 aa).

The SAC domain occupies 147–527 (LTELDIDGKH…ADAVTGKSYY (381 aa)). Positions 456-467 (RFNCADSLDRTN) match the Phosphatase catalytic core; degenerate motif. In terms of domain architecture, WW spans 508–542 (APLPPGWEKRADAVTGKSYYIDHNTKTTTWSHPCP).

Ubiquitous. Most abundant in the roots with lower expression levels throughout the leaves and shoot.

Its function is as follows. Probable phosphoinositide phosphatase that could be involved in stress signaling. This chain is Probable phosphoinositide phosphatase SAC9 (SAC9), found in Arabidopsis thaliana (Mouse-ear cress).